A 548-amino-acid polypeptide reads, in one-letter code: T-complex protein 1 subunit theta (548 aa).

An N-acetylalanine modification is found at Ala-2. Ser-23 is modified (phosphoserine). Phosphotyrosine is present on Tyr-30. The ADP site is built by Tyr-47 and Gly-48. Asp-99 provides a ligand contact to Mg(2+). Residues Gly-100, Thr-101, Asn-102, and Phe-103 each coordinate ADP. Gly-100, Thr-101, and Asn-102 together coordinate ATP. Ser-162 is modified (phosphoserine). ADP contacts are provided by Met-169, Ser-170, and Lys-171. Positions 170 and 171 each coordinate ATP. Residues Lys-224, Lys-254, and Lys-260 each participate in a glycyl lysine isopeptide (Lys-Gly) (interchain with G-Cter in SUMO2) cross-link. A phosphoserine mark is found at Ser-269 and Ser-317. An N6-acetyllysine mark is found at Lys-318 and Lys-400. Residue Gly-412 coordinates ADP. Residue Gly-412 participates in ATP binding. A Glycyl lysine isopeptide (Lys-Gly) (interchain with G-Cter in SUMO1) cross-link involves residue Lys-459. Lys-466 bears the N6-acetyllysine mark. Position 499 (Asp-499) interacts with ADP. 2 residues coordinate ATP: Asp-499 and Lys-504. At Tyr-505 the chain carries Phosphotyrosine. Positions 529–548 are disordered; sequence PAGGPKPPSGKKDWDEDQND. Residue Lys-534 forms a Glycyl lysine isopeptide (Lys-Gly) (interchain with G-Cter in SUMO2) linkage. The residue at position 537 (Ser-537) is a Phosphoserine. Lys-539 is covalently cross-linked (Glycyl lysine isopeptide (Lys-Gly) (interchain with G-Cter in SUMO2)).

Belongs to the TCP-1 chaperonin family. In terms of assembly, component of the chaperonin-containing T-complex (TRiC), a hexadecamer composed of two identical back-to-back stacked rings enclosing a protein folding chamber. Each ring is made up of eight different subunits: TCP1/CCT1, CCT2, CCT3, CCT4, CCT5, CCT6A/CCT6, CCT7, CCT8. Interacts with PACRG. Interacts with DNAAF4. Interacts with synaptic plasticity regulator PANTS.

The protein resides in the cytoplasm. It localises to the cytoskeleton. Its subcellular location is the microtubule organizing center. It is found in the centrosome. The protein localises to the cilium basal body. The enzyme catalyses ATP + H2O = ADP + phosphate + H(+). In terms of biological role, component of the chaperonin-containing T-complex (TRiC), a molecular chaperone complex that assists the folding of actin, tubulin and other proteins upon ATP hydrolysis. The TRiC complex mediates the folding of WRAP53/TCAB1, thereby regulating telomere maintenance. As part of the TRiC complex may play a role in the assembly of BBSome, a complex involved in ciliogenesis regulating transports vesicles to the cilia. The chain is T-complex protein 1 subunit theta (CCT8) from Bos taurus (Bovine).